The primary structure comprises 297 residues: tRNA dimethylallyltransferase (297 aa).

8–15 (GATASGKS) lines the ATP pocket. Substrate is bound at residue 10–15 (TASGKS). The interval 33–36 (DSLS) is interaction with substrate tRNA.

Belongs to the IPP transferase family. Monomer. The cofactor is Mg(2+).

It carries out the reaction adenosine(37) in tRNA + dimethylallyl diphosphate = N(6)-dimethylallyladenosine(37) in tRNA + diphosphate. Functionally, catalyzes the transfer of a dimethylallyl group onto the adenine at position 37 in tRNAs that read codons beginning with uridine, leading to the formation of N6-(dimethylallyl)adenosine (i(6)A). The chain is tRNA dimethylallyltransferase from Sulfurimonas denitrificans (strain ATCC 33889 / DSM 1251) (Thiomicrospira denitrificans (strain ATCC 33889 / DSM 1251)).